Reading from the N-terminus, the 471-residue chain is Neuraminidase (471 aa).

Over 1-6 the chain is Intravirion; it reads MNPNQK. A helical transmembrane segment spans residues 7–27; sequence LFALSGVAIALSVLNLLIGIS. The tract at residues 11 to 33 is involved in apical transport and lipid raft association; that stretch reads SGVAIALSVLNLLIGISNVGLNV. Residues 28–471 lie on the Virion surface side of the membrane; the sequence is NVGLNVSLHL…PDGAQIQYFS (444 aa). Residues asparagine 32, asparagine 47, asparagine 56, asparagine 57, asparagine 67, asparagine 68, and asparagine 87 are each glycosylated (N-linked (GlcNAc...) asparagine; by host). The hypervariable stalk region stretch occupies residues 36-87; sequence HLKGEGVKQENNLTCTTITQNNTTVVENTYVNNTTIINKGTNLKAPNYLLLN. The segment at 90-471 is head of neuraminidase; sequence LCSVEGWVVI…PDGAQIQYFS (382 aa). Cystine bridges form between cysteine 91/cysteine 419, cysteine 123/cysteine 128, cysteine 183/cysteine 230, cysteine 232/cysteine 237, cysteine 278/cysteine 291, cysteine 280/cysteine 289, cysteine 318/cysteine 336, and cysteine 423/cysteine 450. Residue arginine 117 coordinates substrate. An N-linked (GlcNAc...) asparagine; by host glycan is attached at asparagine 145. The active-site Proton donor/acceptor is aspartate 150. Arginine 151 contacts substrate. Residues asparagine 200 and asparagine 234 are each glycosylated (N-linked (GlcNAc...) asparagine; by host). 276 to 277 contributes to the substrate binding site; it reads EE. Arginine 292 contacts substrate. Ca(2+) contacts are provided by aspartate 293, glycine 297, and aspartate 324. Arginine 371 is a binding site for substrate. Asparagine 401 is a glycosylation site (N-linked (GlcNAc...) asparagine; by host). Residue tyrosine 405 is the Nucleophile of the active site.

The protein belongs to the glycosyl hydrolase 34 family. Homotetramer. It depends on Ca(2+) as a cofactor. In terms of processing, N-glycosylated.

It localises to the virion membrane. The protein resides in the host apical cell membrane. It carries out the reaction Hydrolysis of alpha-(2-&gt;3)-, alpha-(2-&gt;6)-, alpha-(2-&gt;8)- glycosidic linkages of terminal sialic acid residues in oligosaccharides, glycoproteins, glycolipids, colominic acid and synthetic substrates.. Inhibited by the neuraminidase inhibitors zanamivir (Relenza) and oseltamivir (Tamiflu). These drugs interfere with the release of progeny virus from infected cells and are effective against all influenza strains. Resistance to neuraminidase inhibitors is quite rare. Its function is as follows. Catalyzes the removal of terminal sialic acid residues from viral and cellular glycoconjugates. Cleaves off the terminal sialic acids on the glycosylated HA during virus budding to facilitate virus release. Additionally helps virus spread through the circulation by further removing sialic acids from the cell surface. These cleavages prevent self-aggregation and ensure the efficient spread of the progeny virus from cell to cell. Otherwise, infection would be limited to one round of replication. Described as a receptor-destroying enzyme because it cleaves a terminal sialic acid from the cellular receptors. May facilitate viral invasion of the upper airways by cleaving the sialic acid moieties on the mucin of the airway epithelial cells. Likely to plays a role in the budding process through its association with lipid rafts during intracellular transport. May additionally display a raft-association independent effect on budding. Plays a role in the determination of host range restriction on replication and virulence. Sialidase activity in late endosome/lysosome traffic seems to enhance virus replication. The chain is Neuraminidase from Aves (Horse).